A 1533-amino-acid chain; its full sequence is DNA topoisomerase 2-alpha (1533 aa).

Position 1 is an N-acetylmethionine (Met1). Residues 1–22 form a disordered region; the sequence is MEVSPLQPVNENMQVNKTKKNE. Ser4 is subject to Phosphoserine. A compositionally biased stretch (polar residues) spans 7-16; sequence QPVNENMQVN. Lys17 is covalently cross-linked (Glycyl lysine isopeptide (Lys-Gly) (interchain with G-Cter in SUMO2)). Residues Asn91, Asn120, and 148-150 contribute to the ATP site; that span reads SSN. Glycyl lysine isopeptide (Lys-Gly) (interchain with G-Cter in SUMO2) cross-links involve residues Lys156 and Lys157. Residue 161–168 participates in ATP binding; the sequence is GRNGYGAK. A Glycyl lysine isopeptide (Lys-Gly) (interchain with G-Cter in SUMO2) cross-link involves residue Lys261. Thr282 is subject to Phosphothreonine. The segment at 342-344 is interaction with DNA; that stretch reads KKK. Residue Lys352 forms a Glycyl lysine isopeptide (Lys-Gly) (interchain with G-Cter in SUMO2) linkage. 376-378 provides a ligand contact to ATP; sequence QTK. Glycyl lysine isopeptide (Lys-Gly) (interchain with G-Cter in SUMO2) cross-links involve residues Lys386, Lys397, Lys416, Lys418, Lys425, and Lys440. In terms of domain architecture, Toprim spans 455 to 572; that stretch reads CTLILTEGDS…SLLRHRFLEE (118 aa). Glu461 serves as a coordination point for Mg(2+). Residues Lys466, Lys480, and Lys529 each participate in a glycyl lysine isopeptide (Lys-Gly) (interchain with G-Cter in SUMO2) cross-link. Mg(2+) is bound by residues Asp541 and Asp543. Residues Lys584, Lys599, Lys614, Lys622, Lys625, Lys632, Lys639, Lys655, Lys662, and Lys676 each participate in a glycyl lysine isopeptide (Lys-Gly) (interchain with G-Cter in SUMO2) cross-link. The Topo IIA-type catalytic domain maps to 715–1171; it reads IPSMVDGLKP…SPSDLWKEDL (457 aa). The active-site O-(5'-phospho-DNA)-tyrosine intermediate is Tyr805. The interval 990–999 is interaction with DNA; it reads KLQTSLTCNS. Lys1075 is covalently cross-linked (Glycyl lysine isopeptide (Lys-Gly) (interchain with G-Cter in SUMO2)). Disordered stretches follow at residues 1090-1121 and 1183-1215; these read WKEA…VADS and AKEK…PSPC. Acidic residues predominate over residues 1099–1108; it reads DEEENEESDN. Ser1106 is modified (phosphoserine; by CK1). Residues Lys1114, Lys1196, and Lys1204 each participate in a glycyl lysine isopeptide (Lys-Gly) (interchain with G-Cter in SUMO2) cross-link. Thr1205 bears the Phosphothreonine mark. Residue Ser1213 is modified to Phosphoserine. A Glycyl lysine isopeptide (Lys-Gly) (interchain with G-Cter in SUMO2) cross-link involves residue Lys1228. Positions 1231–1533 are disordered; sequence AEKKIKKKIK…LEESDEDDLF (303 aa). Lys1240 is covalently cross-linked (Glycyl lysine isopeptide (Lys-Gly) (interchain with G-Cter in SUMO1); alternate). Lys1240 is covalently cross-linked (Glycyl lysine isopeptide (Lys-Gly) (interchain with G-Cter in SUMO2); alternate). Residue Thr1244 is modified to Phosphothreonine. The residue at position 1247 (Ser1247) is a Phosphoserine. Over residues 1256–1272 the composition is skewed to basic and acidic residues; that stretch reads EGLKQRLEKKQKREPGT. Residues Lys1259, Lys1276, Lys1283, and Lys1286 each participate in a glycyl lysine isopeptide (Lys-Gly) (interchain with G-Cter in SUMO2) cross-link. Phosphoserine is present on residues Ser1295, Ser1297, Ser1299, and Ser1302. Residue Thr1327 is modified to Phosphothreonine. Ser1332 and Ser1337 each carry phosphoserine. Thr1343 is subject to Phosphothreonine. Phosphoserine is present on residues Ser1351 and Ser1354. The span at 1360–1371 shows a compositional bias: basic and acidic residues; sequence TSPKHTNKEPKP. Residues Lys1363, Lys1367, and Lys1373 each participate in a glycyl lysine isopeptide (Lys-Gly) (interchain with G-Cter in SUMO2) cross-link. Ser1374 and Ser1377 each carry phosphoserine. Residue Lys1387 forms a Glycyl lysine isopeptide (Lys-Gly) (interchain with G-Cter in SUMO2) linkage. 2 positions are modified to phosphoserine: Ser1393 and Ser1395. Residues 1409–1433 are compositionally biased toward low complexity; it reads KPVSKKNVTVKKTAAKSQSSTSTTG. Lys1424 participates in a covalent cross-link: Glycyl lysine isopeptide (Lys-Gly) (interchain with G-Cter in SUMO2); alternate. Lys1424 carries the N6-acetyllysine; alternate modification. The segment at 1435-1441 is interaction with PLSCR1; that stretch reads KKRAAPK. Over residues 1443–1455 the composition is skewed to basic and acidic residues; sequence AKKDPDLDSDVSK. A Glycyl lysine isopeptide (Lys-Gly) (interchain with G-Cter in SUMO2); alternate cross-link involves residue Lys1444. Lys1444 carries the N6-acetyllysine; alternate modification. Position 1451 is a phosphoserine (Ser1451). Residues Lys1456 and Lys1461 each participate in a glycyl lysine isopeptide (Lys-Gly) (interchain with G-Cter in SUMO2) cross-link. Phosphoserine is present on Ser1471. Thr1472 carries the phosphothreonine modification. Residues Ser1473, Ser1476, and Ser1478 each carry the phosphoserine modification. Glycyl lysine isopeptide (Lys-Gly) (interchain with G-Cter in SUMO2) cross-links involve residues Lys1486 and Lys1494. Positions 1493 to 1504 are enriched in basic and acidic residues; sequence PKGESDDFHLDL. Ser1497 and Ser1527 each carry phosphoserine.

The protein belongs to the type II topoisomerase family. Homodimer. Interacts with COPS5. Interacts with RECQL5; this stimulates DNA decatenation. Interacts with SETMAR; stimulates the topoisomerase activity. Interacts with DHX9; this interaction occurs in a E2 enzyme UBE2I- and RNA-dependent manner, negatively regulates DHX9-mediated double-stranded DNA and RNA duplex helicase activity and stimulates TOP2A-mediated supercoiled DNA relaxation activity. Interacts with HNRNPU (via C-terminus); this interaction protects the topoisomerase TOP2A from degradation and positively regulates the relaxation of supercoiled DNA in a RNA-dependent manner. Interacts with MCM3AP. Interacts with ERCC6. Interacts with PLSCR1. Interacts with GCNA; this interaction allows the resolution of topoisomerase II (TOP2A) DNA-protein cross-links. Interacts with POL1RA/RPA1 (via dock II) and UBTF in the context of Pol I complex; may assist Pol I transcription initiation by releasing supercoils occurring during DNA unwinding. Interacts with TPRN; TPRN interacts with a number of DNA damage response proteins, is recruited to sites of DNA damage and may play a role in DNA damage repair. It depends on Mg(2+) as a cofactor. Requires Mn(2+) as cofactor. Ca(2+) is required as a cofactor. In terms of processing, phosphorylation has no effect on catalytic activity. However, phosphorylation at Ser-1106 by CSNK1D/CK1 promotes DNA cleavable complex formation.

The protein resides in the cytoplasm. Its subcellular location is the nucleus. It is found in the nucleoplasm. It localises to the nucleolus. It catalyses the reaction ATP-dependent breakage, passage and rejoining of double-stranded DNA.. Its function is as follows. Key decatenating enzyme that alters DNA topology by binding to two double-stranded DNA molecules, generating a double-stranded break in one of the strands, passing the intact strand through the broken strand, and religating the broken strand. May play a role in regulating the period length of BMAL1 transcriptional oscillation. This Sus scrofa (Pig) protein is DNA topoisomerase 2-alpha (TOP2A).